Here is a 149-residue protein sequence, read N- to C-terminus: Large ribosomal subunit protein bL9 (149 aa).

This sequence belongs to the bacterial ribosomal protein bL9 family.

In terms of biological role, binds to the 23S rRNA. This is Large ribosomal subunit protein bL9 from Helicobacter pylori (strain HPAG1).